A 771-amino-acid polypeptide reads, in one-letter code: Hyperosmolality-gated Ca2+ permeable channel 1.3 (771 aa).

Residues 7–27 form a helical membrane-spanning segment; it reads IGVAAAINILTAIIFLLAFAI. At S54 the chain carries Phosphoserine. The next 9 helical transmembrane spans lie at 101-121, 158-178, 375-395, 427-447, 467-487, 512-532, 584-604, 630-650, and 651-671; these read IYLI…SILV, FWTH…VLMK, LIMH…IAFV, FLPG…LMVM, YYIF…SAFE, ATFF…GEIL, PVTP…YLVF, IISA…TKGA, and AQST…HRYC. Residues 744–771 are disordered; sequence VPTKRQSRINTPAVSHASRGSSRSPPSK. Over residues 751–771 the composition is skewed to polar residues; the sequence is RINTPAVSHASRGSSRSPPSK.

This sequence belongs to the CSC1 (TC 1.A.17) family. In terms of processing, phosphorylated at Ser-54 by BIK1 in response to pathogen-associated molecular pattern (PAMP) perception, promoting its activation. Preferentially expressed in guard cells.

Its subcellular location is the cell membrane. The catalysed reaction is Ca(2+)(in) = Ca(2+)(out). Activated following phosphorylation at Ser-54 by BIK1. Its function is as follows. Calcium-permeable channel that plays a key role in plant stomatal immunity. In response to pathogen-associated molecular pattern (PAMP) perception, phosphorylated and activated by BIK1, triggering rapid influx of calcium ions across the plasma membrane, leading to stomatal closure. This is Hyperosmolality-gated Ca2+ permeable channel 1.3 from Arabidopsis thaliana (Mouse-ear cress).